The sequence spans 846 residues: Leucine--tRNA ligase (846 aa).

The 'HIGH' region signature appears at 47–57 (PYPSGRIHMGH). The 'KMSKS' region signature appears at 621–625 (KMSKS). Residue lysine 624 participates in ATP binding.

It belongs to the class-I aminoacyl-tRNA synthetase family.

The protein resides in the cytoplasm. The catalysed reaction is tRNA(Leu) + L-leucine + ATP = L-leucyl-tRNA(Leu) + AMP + diphosphate. The sequence is that of Leucine--tRNA ligase from Zymomonas mobilis subsp. mobilis (strain ATCC 31821 / ZM4 / CP4).